Reading from the N-terminus, the 505-residue chain is Phosphomevalonate kinase, peroxisomal (505 aa).

The residue at position 2 (A2) is an N-acetylalanine. Residues 57–65 carry the Peroxisomal targeting signal PTS2 motif; the sequence is DVKLTSPQL. 177–187 is an ATP binding site; that stretch reads VAKTGLGSSAA.

It belongs to the GHMP kinase family. Mevalonate kinase subfamily.

Its subcellular location is the peroxisome. It catalyses the reaction (R)-5-phosphomevalonate + ATP = (R)-5-diphosphomevalonate + ADP. It functions in the pathway isoprenoid biosynthesis; isopentenyl diphosphate biosynthesis via mevalonate pathway; isopentenyl diphosphate from (R)-mevalonate: step 2/3. This Arabidopsis thaliana (Mouse-ear cress) protein is Phosphomevalonate kinase, peroxisomal.